A 138-amino-acid polypeptide reads, in one-letter code: MLQPKRTKYRKPHNVSYEGKAKGNSYVAFGEYGIMATNGAWIDARQIESARIAISKQLGKTGKMWIRIFPHMSKTKKPLEVRMGSGKGNPEFWVAVVKEGTVMFEVANIPEAQMKEALTRAGHKLGVTWKIVARQGAQ.

It belongs to the universal ribosomal protein uL16 family. Part of the 50S ribosomal subunit.

Functionally, binds 23S rRNA and is also seen to make contacts with the A and possibly P site tRNAs. This chain is Large ribosomal subunit protein uL16, found in Mycoplasmoides gallisepticum (strain R(low / passage 15 / clone 2)) (Mycoplasma gallisepticum).